A 438-amino-acid polypeptide reads, in one-letter code: 5-methylthioadenosine/S-adenosylhomocysteine deaminase (438 aa).

Zn(2+) contacts are provided by His-71 and His-73. Residues Glu-100 and His-192 each contribute to the substrate site. His-219 is a Zn(2+) binding site. Substrate contacts are provided by Glu-222 and Asp-307. Residue Asp-307 coordinates Zn(2+).

This sequence belongs to the metallo-dependent hydrolases superfamily. MTA/SAH deaminase family. The cofactor is Zn(2+).

The enzyme catalyses S-adenosyl-L-homocysteine + H2O + H(+) = S-inosyl-L-homocysteine + NH4(+). The catalysed reaction is S-methyl-5'-thioadenosine + H2O + H(+) = S-methyl-5'-thioinosine + NH4(+). Its function is as follows. Catalyzes the deamination of 5-methylthioadenosine and S-adenosyl-L-homocysteine into 5-methylthioinosine and S-inosyl-L-homocysteine, respectively. Is also able to deaminate adenosine. The chain is 5-methylthioadenosine/S-adenosylhomocysteine deaminase from Syntrophobacter fumaroxidans (strain DSM 10017 / MPOB).